We begin with the raw amino-acid sequence, 1040 residues long: Beta-galactosidase (1040 aa).

Substrate contacts are provided by Asn111 and Asp210. A Na(+)-binding site is contributed by Asp210. Mg(2+) contacts are provided by Glu427, His429, and Glu472. Substrate is bound by residues Glu472 and 548-551; that span reads EYAH. The Proton donor role is filled by Glu472. Glu548 (nucleophile) is an active-site residue. Position 608 (Asn608) interacts with Mg(2+). Residues Phe612 and Asp615 each contribute to the Na(+) site. Substrate contacts are provided by Asp615 and Trp1016.

This sequence belongs to the glycosyl hydrolase 2 family. In terms of assembly, homotetramer. Mg(2+) serves as cofactor. The cofactor is Na(+).

The enzyme catalyses Hydrolysis of terminal non-reducing beta-D-galactose residues in beta-D-galactosides.. The polypeptide is Beta-galactosidase (Pectobacterium atrosepticum (strain SCRI 1043 / ATCC BAA-672) (Erwinia carotovora subsp. atroseptica)).